Consider the following 337-residue polypeptide: Ferredoxin--NADP reductase (337 aa).

Positions 42, 50, 55, 97, 130, 292, and 333 each coordinate FAD.

Belongs to the ferredoxin--NADP reductase type 2 family. As to quaternary structure, homodimer. FAD is required as a cofactor.

It catalyses the reaction 2 reduced [2Fe-2S]-[ferredoxin] + NADP(+) + H(+) = 2 oxidized [2Fe-2S]-[ferredoxin] + NADPH. This Streptococcus mutans serotype c (strain ATCC 700610 / UA159) protein is Ferredoxin--NADP reductase.